We begin with the raw amino-acid sequence, 201 residues long: Type III effector protein HopBF1 (201 aa).

Ser-39, Gln-40, Lys-41, Asp-106, Ile-108, and Asp-113 together coordinate ATP. Asp-154 is an active-site residue. Gln-156 contributes to the ATP binding site.

This sequence belongs to the HopBF1 family.

It is found in the secreted. The protein localises to the host cell. It catalyses the reaction L-seryl-[protein] + ATP = O-phospho-L-seryl-[protein] + ADP + H(+). Effector protein that targets and inactivates the plant molecular chaperone HSP90 during infection. HopBF1 is recognized by HSP90 as a host client. As a result, HopBF1 phosphorylates HSP90, leading to the inactivation of the HSP90 ATPase activity and chaperone function. Phosphorylation of HSP90 prevents activation of immune receptors that trigger the hypersensitive response in plants. HopBF1 is sufficient to cause severe disease symptoms in plants infected with P.syringae. In vitro, can phosphorylate the recombinant yeast HSP82 (HSP90) on Ser-99, Triticum aestivum (wheat) HSP90 and human HSP 90-beta, but not the prokaryotic HSP90 orthologs, HtpG from E.coli and P.syringae. Does not act on generic protein kinase substrates such as casein and myelin basic protein, as well as the yeast HSP70s and Bip chaperones. This Pseudomonas syringae pv. syringae (strain FF5) protein is Type III effector protein HopBF1.